Reading from the N-terminus, the 554-residue chain is Oxygen-dependent choline dehydrogenase (554 aa).

4-33 (DYIIIGAGSAGNVLATRLTEDPNTTVLLLE) serves as a coordination point for FAD. Histidine 473 (proton acceptor) is an active-site residue.

It belongs to the GMC oxidoreductase family. It depends on FAD as a cofactor.

It carries out the reaction choline + A = betaine aldehyde + AH2. It catalyses the reaction betaine aldehyde + NAD(+) + H2O = glycine betaine + NADH + 2 H(+). The protein operates within amine and polyamine biosynthesis; betaine biosynthesis via choline pathway; betaine aldehyde from choline (cytochrome c reductase route): step 1/1. Involved in the biosynthesis of the osmoprotectant glycine betaine. Catalyzes the oxidation of choline to betaine aldehyde and betaine aldehyde to glycine betaine at the same rate. The protein is Oxygen-dependent choline dehydrogenase of Klebsiella pneumoniae (strain 342).